Consider the following 53-residue polypeptide: MRVIRMTNYEAGTLLTCSHEGCGCRVRIEVPCHCAGAGDAYRCTCGDELAPVK.

A propeptide spanning residues 1 to 6 (MRVIRM) is cleaved from the precursor. The Cu(+) site is built by Cys-17, His-19, Cys-22, Cys-24, Cys-32, His-33, Cys-34, Cys-43, and Cys-45.

This sequence belongs to the metallothionein superfamily.

In terms of biological role, metallothioneins are small proteins that have a high content of cysteine residues which allow them to bind heavy metal ions through clusters of thiolate bonds. MymT binds up to seven ions of Cu(+), with a preference for four to six Cu(+) ions, in a solvent-shielded core. MymT protects M.tuberculosis from copper toxicity. In Mycobacterium tuberculosis (strain CDC 1551 / Oshkosh), this protein is Metallothionein (mymT).